Here is a 188-residue protein sequence, read N- to C-terminus: dCTP deaminase (188 aa).

DCTP contacts are provided by residues 111 to 116, 135 to 137, glutamine 156, tyrosine 170, lysine 179, and glutamine 180; these read KSTYAR and TLE. The Proton donor/acceptor role is filled by glutamate 137.

Belongs to the dCTP deaminase family. As to quaternary structure, homotrimer.

The enzyme catalyses dCTP + H2O + H(+) = dUTP + NH4(+). It functions in the pathway pyrimidine metabolism; dUMP biosynthesis; dUMP from dCTP (dUTP route): step 1/2. Functionally, catalyzes the deamination of dCTP to dUTP. This Rickettsia bellii (strain OSU 85-389) protein is dCTP deaminase.